The sequence spans 70 residues: Alpha-conotoxin EIIB (70 aa).

An N-terminal signal peptide occupies residues 1-21 (MGMRMMFIVFLLVVLATTVVS). The propeptide occupies 22-51 (FTLDHVLGLASEGRNAKAIDNALDQRDPKR). Position 52 is a pyrrolidone carboxylic acid (glutamine 52). Proline 54 carries the post-translational modification Hydroxyproline. 2 disulfides stabilise this stretch: cysteine 56/cysteine 62 and cysteine 57/cysteine 67. Cysteine 67 carries the cysteine amide modification.

In terms of tissue distribution, expressed by the venom duct.

It is found in the secreted. Its function is as follows. Alpha-conotoxins bind to the nicotinic acetylcholine receptors (nAChR) and inhibit them. This peptide potently blocks muscular nicotinic acetylcholine receptor (CHRNA1-CHRNB1-CHRNG-CHRND), and has no effect on neuronal receptors. It is able to totally displace [125I]-Bgtx from the Torpedo receptor with an inhibition constant (Ki) of 2.2 and 0.7 nM. The sequence is that of Alpha-conotoxin EIIB from Conus ermineus (Agate cone).